The chain runs to 494 residues: tRNA-2-methylthio-N(6)-dimethylallyladenosine synthase (494 aa).

The 117-residue stretch at 4 to 120 folds into the MTTase N-terminal domain; sequence RSYQVRTFGC…LPVLLERARH (117 aa). Positions 13, 49, 83, 157, 161, and 164 each coordinate [4Fe-4S] cluster. In terms of domain architecture, Radical SAM core spans 143–374; the sequence is RASHHSAWVS…SLQDEMSWAE (232 aa). In terms of domain architecture, TRAM spans 376 to 449; it reads RAQVGRRVEI…PHHLTADGPL (74 aa). Residues 465 to 494 are disordered; sequence RAIAGDTPRPDRPAVSLGMPQLRPSAPAAR.

The protein belongs to the methylthiotransferase family. MiaB subfamily. Monomer. [4Fe-4S] cluster serves as cofactor.

The protein resides in the cytoplasm. The enzyme catalyses N(6)-dimethylallyladenosine(37) in tRNA + (sulfur carrier)-SH + AH2 + 2 S-adenosyl-L-methionine = 2-methylsulfanyl-N(6)-dimethylallyladenosine(37) in tRNA + (sulfur carrier)-H + 5'-deoxyadenosine + L-methionine + A + S-adenosyl-L-homocysteine + 2 H(+). Functionally, catalyzes the methylthiolation of N6-(dimethylallyl)adenosine (i(6)A), leading to the formation of 2-methylthio-N6-(dimethylallyl)adenosine (ms(2)i(6)A) at position 37 in tRNAs that read codons beginning with uridine. In Parafrankia sp. (strain EAN1pec), this protein is tRNA-2-methylthio-N(6)-dimethylallyladenosine synthase.